The primary structure comprises 304 residues: tRNA pseudouridine synthase B (304 aa).

Asp-41 (nucleophile) is an active-site residue.

Belongs to the pseudouridine synthase TruB family. Type 1 subfamily.

It carries out the reaction uridine(55) in tRNA = pseudouridine(55) in tRNA. Responsible for synthesis of pseudouridine from uracil-55 in the psi GC loop of transfer RNAs. This is tRNA pseudouridine synthase B from Nitratidesulfovibrio vulgaris (strain ATCC 29579 / DSM 644 / CCUG 34227 / NCIMB 8303 / VKM B-1760 / Hildenborough) (Desulfovibrio vulgaris).